Here is a 394-residue protein sequence, read N- to C-terminus: Suppressor APC domain-containing protein 2 (394 aa).

Disordered stretches follow at residues M1–G23, L95–F125, and G150–A188. A compositionally biased stretch (polar residues) spans S177–A188. At T219 the chain carries Phosphothreonine. A coiled-coil region spans residues G227–A277. S284 carries the post-translational modification Phosphoserine. The stretch at Q336 to Q384 forms a coiled coil.

As to quaternary structure, interacts with a spindle orientation complex at least composed of GNAI1, GPSM2 and NUMA1. Interacts with GPSM2 (via TPR motifs); this interaction is required to prevent GPSM2 anchoring at the mitotic apical cortex and is inhibited in presence of NUMA1 in a dose dependent manner. Interacts with PARD3. Expressed in 5-month-old fetal tissues, including stomach, intestine, colon, liver, brain, lung, heart, spleen and kidney. Undetectable in non-cancerous adult tissues. Expressed in many primary gastric carcinoma, but almost not in adjacent normal mucosa. Expressed preferentially in M and G1 phases, compared to S and G2 phases. Expression is up-regulated in hepatocellular carcinoma (HCC) and colorectal cancer (CRC) tissues (at protein level).

Its subcellular location is the cytoplasm. It is found in the nucleus. It localises to the cell cortex. The protein localises to the apical cell membrane. The protein resides in the cell junction. Its subcellular location is the tight junction. Plays a role in planar mitotic spindle orientation in retinal progenitor cells (RPCs) and promotes the production of symmetric terminal divisions. Negatively regulates the mitotic apical cortex localization of GPSM2. Involved also in positive regulation of cell proliferation and tumor cell growth. This Homo sapiens (Human) protein is Suppressor APC domain-containing protein 2.